We begin with the raw amino-acid sequence, 500 residues long: Putative glucokinase-2 (500 aa).

Ser-2 carries the post-translational modification N-acetylserine. Phosphoserine is present on Ser-2. The Hexokinase domain maps to 12–498 (EALEDAVVEI…SGVGAALCAL (487 aa)). Residues 74 to 217 (NGTERGVLLA…LSMINVVALT (144 aa)) are hexokinase small subdomain. An ATP-binding site is contributed by Lys-110. Residues 159 to 185 (KMGFTFSYPVDQTSLSSGTLIRWTKSF) form a glucose-binding region. Residues 218-487 (NDTVGTFLSH…RKIHLRLAKD (270 aa)) are hexokinase large subdomain. Ser-470 is subject to Phosphoserine. Residue 487-492 (DGSGVG) participates in ATP binding.

The protein belongs to the hexokinase family.

The protein localises to the cytoplasm. The catalysed reaction is D-glucose + ATP = D-glucose 6-phosphate + ADP + H(+). Its pathway is carbohydrate degradation; glycolysis; D-glyceraldehyde 3-phosphate and glycerone phosphate from D-glucose: step 1/4. Putative glucokinase involved in phosphorylation of aldohexoses and glucose uptake. Involved in sporulation. Required for the full activation of the early meiotic inducer IME1. In Saccharomyces cerevisiae (strain ATCC 204508 / S288c) (Baker's yeast), this protein is Putative glucokinase-2 (EMI2).